Reading from the N-terminus, the 929-residue chain is Probable LRR receptor-like serine/threonine-protein kinase At1g67720 (929 aa).

The first 21 residues, 1–21 (MGLCLAQLAVTCLFLVPFVLS), serve as a signal peptide directing secretion. Residues 22–531 (QVTEFVSIDC…NEAQRKHFWQ (510 aa)) lie on the Extracellular side of the membrane. Residues Asn36, Asn173, Asn236, Asn293, Asn320, Asn332, and Asn407 are each glycosylated (N-linked (GlcNAc...) asparagine). LRR repeat units lie at residues 413-437 (PPRV…INYM), 438-460 (EALT…MSKL), 461-484 (VNLK…LAHL), and 485-508 (PNLQ…LLKG). The N-linked (GlcNAc...) asparagine glycan is linked to Asn494. Residues 532-552 (ILGISIAAVAILLLLVGGSLV) form a helical membrane-spanning segment. Residues 553 to 929 (LLCALRKTKR…SRNSLAPAAR (377 aa)) lie on the Cytoplasmic side of the membrane. The Protein kinase domain occupies 606–880 (DNFSKKVGRG…EVIVAIQDAI (275 aa)). ATP is bound by residues 612–620 (VGRGSFGSV) and Lys634. At Tyr679 the chain carries Phosphotyrosine. The Proton acceptor role is filled by Asp731. 2 positions are modified to phosphoserine: Ser735 and Ser764. Thr770 carries the phosphothreonine modification. Tyr778 bears the Phosphotyrosine mark.

It belongs to the protein kinase superfamily. Ser/Thr protein kinase family.

It is found in the membrane. It carries out the reaction L-seryl-[protein] + ATP = O-phospho-L-seryl-[protein] + ADP + H(+). It catalyses the reaction L-threonyl-[protein] + ATP = O-phospho-L-threonyl-[protein] + ADP + H(+). In Arabidopsis thaliana (Mouse-ear cress), this protein is Probable LRR receptor-like serine/threonine-protein kinase At1g67720.